Here is a 243-residue protein sequence, read N- to C-terminus: tRNA1(Val) (adenine(37)-N6)-methyltransferase (243 aa).

This sequence belongs to the methyltransferase superfamily. tRNA (adenine-N(6)-)-methyltransferase family.

The protein localises to the cytoplasm. It carries out the reaction adenosine(37) in tRNA1(Val) + S-adenosyl-L-methionine = N(6)-methyladenosine(37) in tRNA1(Val) + S-adenosyl-L-homocysteine + H(+). In terms of biological role, specifically methylates the adenine in position 37 of tRNA(1)(Val) (anticodon cmo5UAC). The polypeptide is tRNA1(Val) (adenine(37)-N6)-methyltransferase (Shewanella loihica (strain ATCC BAA-1088 / PV-4)).